We begin with the raw amino-acid sequence, 470 residues long: Glutamyl-tRNA reductase (470 aa).

Substrate is bound by residues 49–52 (TCNR), serine 109, 114–116 (ESQ), and glutamine 120. Cysteine 50 (nucleophile) is an active-site residue. 223 to 228 (GAGAVG) is a binding site for NADP(+).

This sequence belongs to the glutamyl-tRNA reductase family. As to quaternary structure, homodimer.

The enzyme catalyses (S)-4-amino-5-oxopentanoate + tRNA(Glu) + NADP(+) = L-glutamyl-tRNA(Glu) + NADPH + H(+). It functions in the pathway porphyrin-containing compound metabolism; protoporphyrin-IX biosynthesis; 5-aminolevulinate from L-glutamyl-tRNA(Glu): step 1/2. Catalyzes the NADPH-dependent reduction of glutamyl-tRNA(Glu) to glutamate 1-semialdehyde (GSA). The chain is Glutamyl-tRNA reductase from Frankia alni (strain DSM 45986 / CECT 9034 / ACN14a).